A 417-amino-acid chain; its full sequence is Actin-related protein 10 (417 aa).

This sequence belongs to the actin family. Subunit of dynactin, a multiprotein complex part of a tripartite complex with dynein and a adapter, such as BICDL1, BICD2 or HOOK3. The dynactin complex is built around ACTR1A/ACTB filament and consists of an actin-related filament composed of a shoulder domain, a pointed end and a barbed end. Its length is defined by its flexible shoulder domain. The soulder is composed of 2 DCTN1 subunits, 4 DCTN2 and 2 DCTN3. The 4 DCNT2 (via N-terminus) bind the ACTR1A filament and act as molecular rulers to determine the length. The pointed end is important for binding dynein-dynactin cargo adapters. Consists of 4 subunits: ACTR10, DCNT4, DCTN5 and DCTN6. The barbed end is composed of a CAPZA1:CAPZB heterodimers, which binds ACTR1A/ACTB filament and dynactin and stabilizes dynactin.

The protein localises to the cytoplasm. The protein resides in the cytoskeleton. Part of the dynactin complex that activates the molecular motor dynein for ultra-processive transport along microtubules. The polypeptide is Actin-related protein 10 (ACTR10) (Sus scrofa (Pig)).